We begin with the raw amino-acid sequence, 373 residues long: DNA dC-&gt;dU-editing enzyme APOBEC-3F (373 aa).

2 CMP/dCMP-type deaminase domains span residues 29–137 (RRNT…LCRL) and 174–321 (DDNY…LRSL). K52 participates in a covalent cross-link: (Microbial infection) Glycyl lysine isopeptide (Lys-Gly) (interchain with G-Cter in ubiquitin). Residues H65, C96, and C99 each contribute to the Zn(2+) site. A (Microbial infection) Glycyl lysine isopeptide (Lys-Gly) (interchain with G-Cter in ubiquitin) cross-link involves residue K234. Residue H249 coordinates Zn(2+). E251 acts as the Proton donor in catalysis. Zn(2+) is bound by residues C280 and C283. C280 and C283 are oxidised to a cystine. (Microbial infection) Glycyl lysine isopeptide (Lys-Gly) (interchain with G-Cter in ubiquitin) cross-links involve residues K334, K352, K355, and K358.

It belongs to the cytidine and deoxycytidylate deaminase family. Homodimer. Interacts with APOBEC3G in an RNA-dependent manner. Interacts with AGO1, AGO2 and AGO3. In terms of assembly, (Microbial infection) Interacts with HIV-1 Vif, leading to its ubiquitination and degradation by the proteasome. In the absence of Vif protein, specifically packaged into HIV-1 virions. Zn(2+) is required as a cofactor. In terms of processing, (Microbial infection) Following infection by HIV-1, ubiquitinated by a cullin-5-RING E3 ubiquitin-protein ligase complex (ECS complex) hijacked by the HIV-1 Vif protein, leading to its degradation. In terms of tissue distribution, widely expressed. Highly expressed in ovary.

It is found in the cytoplasm. The protein localises to the P-body. The enzyme catalyses a 2'-deoxycytidine in single-stranded DNA + H2O + H(+) = a 2'-deoxyuridine in single-stranded DNA + NH4(+). Its activity is regulated as follows. (Microbial infection) Antiviral activity is neutralized by the HIV-1 virion infectivity factor (Vif), that prevents its incorporation into progeny virions by both inhibiting its translation and/or by inducing its ubiquitination and subsequent degradation by the 26S proteasome. Functionally, DNA deaminase (cytidine deaminase) which acts as an inhibitor of retrovirus replication and retrotransposon mobility via deaminase-dependent and -independent mechanisms. Exhibits antiviral activity against viruse such as HIV-1 or HIV-2. After the penetration of retroviral nucleocapsids into target cells of infection and the initiation of reverse transcription, it can induce the conversion of cytosine to uracil in the minus-sense single-strand viral DNA, leading to G-to-A hypermutations in the subsequent plus-strand viral DNA. The resultant detrimental levels of mutations in the proviral genome, along with a deamination-independent mechanism that works prior to the proviral integration, together exert efficient antiretroviral effects in infected target cells. Selectively targets single-stranded DNA and does not deaminate double-stranded DNA or single- or double-stranded RNA. Exhibits antiviral activity also against hepatitis B virus (HBV), equine infectious anemia virus (EIAV), xenotropic MuLV-related virus (XMRV) and simian foamy virus (SFV) and may inhibit the mobility of LTR and non-LTR retrotransposons. May also play a role in the epigenetic regulation of gene expression through the process of active DNA demethylation. This Homo sapiens (Human) protein is DNA dC-&gt;dU-editing enzyme APOBEC-3F.